A 371-amino-acid polypeptide reads, in one-letter code: Putative 26S proteasome regulatory subunit homolog MJ1494 (371 aa).

Residue 161-168 participates in ATP binding; sequence GPPGTGKT.

This sequence belongs to the AAA ATPase family.

In terms of biological role, the 26S proteasome is involved in the ATP-dependent degradation of ubiquitinated proteins. The regulatory (or ATPase) complex confers ATP dependency and substrate specificity to the 26S complex. This Methanocaldococcus jannaschii (strain ATCC 43067 / DSM 2661 / JAL-1 / JCM 10045 / NBRC 100440) (Methanococcus jannaschii) protein is Putative 26S proteasome regulatory subunit homolog MJ1494.